Consider the following 204-residue polypeptide: Probable 5-formyltetrahydrofolate cyclo-ligase (204 aa).

K5–R9 serves as a coordination point for ATP. Residues E57, W102, and H140–Y144 each bind substrate. ATP-binding positions include G139–D146 and D188.

The protein belongs to the 5-formyltetrahydrofolate cyclo-ligase family.

The enzyme catalyses (6S)-5-formyl-5,6,7,8-tetrahydrofolate + ATP = (6R)-5,10-methenyltetrahydrofolate + ADP + phosphate. The polypeptide is Probable 5-formyltetrahydrofolate cyclo-ligase (Schizosaccharomyces pombe (strain 972 / ATCC 24843) (Fission yeast)).